We begin with the raw amino-acid sequence, 1478 residues long: MYKQFKKRSKKPLNTIDENATIKVPRLAETTTNISVESSSGGSEENIPASQEHTQRFLSQHSVILAATLGRTQSSSRNIATLSRQPNNFFELVLVRAGVQLDQGDSLILACDHVPIVSKLREIFTSASSYTDKMETFKTGLNAAMAPGSKLVQKLLTGCTVDAAGEEQIYQSQNSMFMNFLMIDFMRDACVEVLLNKIEEVAKSDRVIMGKAAIPLPLLPLMLTQLRYLTASHKVEIYSRIEVIFNRATESAKLDIIANAELILDASMHDEFVELLNINYSSTEDLFHMTTVQTLGNLSLSDRTQAKLRVRILDFATSGQCSDAILPHLIRLLLNVLKIDTDDSVRDLIGSLRGIFNWRHTNETEKISASEDSKKSQLELFGFLELGLIRSKKFYQACQRSSASVPAAEFTSFDMILLLLLIHVNEDNSLYIENILRRRIKLEHITVSILEEIRQHYRHILEQHITTLMNILHDFMREKNRIVSDFAKSSYSILFKIFNSIQKNILKKLLELTCDKSSPHLTTMALELLRELQRKSAKDVQNCATLLIPMLDRISDLSLTQTRVAMDLLCHVAFPDPNLSPCLQLQEQVDMVVKKQLINSIDNIKKQGIIGCVQLIDAMARIANNGVDRDEFIASVENVDSLPDGRGKMAANLIIRTEASIGNSTESLALFFEELATVFNQRNEGTSGCELDNQFIAWACDLVTFRFQASFVTENVPETLKGIKLEYQLNINELDDTDANTESDVLNIGINISKLVLSPKVKACDSIYVLAPLFNYVRVLYKHRHQDSLESINALLGCAIVLPSFFEDDNYVSVFENFEAEQQKDILSIYFHTVNWMRVSISAFASQRDPPTRRRVLSRLGELIRIEQRMKPLLARAPVDFVAPPYQFLTNVKLSNQNQKRPGPKPAAKLNATLPEPDLTGNQPSIADFTIKVGQCKTVKTKTDFEQMYGPRERYRPMEVEIIMLLVEQKFVLNHQLEEEQMGEFLGLLELRFLLEDVVQKLEAAVLRHHDSYDADSFRPHLAKPEDFICDLLPCLHEVNNHLITLGEAIDNQLTEVSHVYSNLDLFKDQFCYIKSCFGLCVRLFALYFAWSEWSDKSQEQLLHKSLLKLQPKTQWKRLEKQSVPQLANLTFQYFLKYEKSVLNLSTAVHLHRLLCNLLKLGSLQSDASQPRFQQAEDLRILCGTLLRRKWFHYSGTLDKGGQCNIYLDELVKGFLKKSNAKSQTELLTELVKQCSILNTKDKALTSFPNFKKANFPLLFRGLCEVLIHSLSGQVSVDSRGDKLKLWESAVDLLNGLLSIVQQVEQPRNFGLFLKHSLLFLKLLLQHGMSALESIVREDPERLTRFLHELQKVTRFLHQLCCHSKSIKNTAIISYIPSLRETIETLVFRVKALLAANNCHSAFHMGNMINRDLHGDSIITPRSSFAGEENSDDELPADDTSVDETVLGDDMGITAVSVSTRPSDGSRRSKSSSRSKCF.

Positions 33–53 (NISVESSSGGSEENIPASQEH) are disordered. Residues 35–45 (SVESSSGGSEE) are compositionally biased toward low complexity. Residue K595 forms a Glycyl lysine isopeptide (Lys-Gly) (interchain with G-Cter in ubiquitin) linkage. Disordered stretches follow at residues 896–918 (NQNQKRPGPKPAAKLNATLPEPD) and 1420–1478 (TPRS…SKCF). The segment covering 1429 to 1442 (ENSDDELPADDTSV) has biased composition (acidic residues). Over residues 1468 to 1478 (RSKSSSRSKCF) the composition is skewed to basic residues.

This sequence belongs to the Fanconi anemia protein FANCD2 family. As to quaternary structure, homodimer; cannot be ubiquitinated and does not bind DNA. Part of a Fanci-Fancd2 heterodimeric complex that binds and scans dsDNA for DNA damage. Interacts with Fancl (via C-terminus). In terms of processing, monoubiquitinated by Fancl in response to ionising radiation.

Its subcellular location is the nucleus. Functionally, required for maintenance of chromosomal stability. Together with Fancl, and probably Fanci, involved in DNA repair of damage caused by agents that induce interstrand cross-links but not agents that cause double strand breaks. Required for S phase checkpoint activation in response to ionizing radiation induced DNA damage. The protein is Fanconi anemia group D2 protein homolog of Drosophila melanogaster (Fruit fly).